Here is a 494-residue protein sequence, read N- to C-terminus: Voltage-gated potassium channel regulatory subunit KCNF1 (494 aa).

The Cytoplasmic portion of the chain corresponds to 1–183; sequence MDGSGERSLP…KPESSCPARV (183 aa). A helical membrane pass occupies residues 184–204; that stretch reads VAVLSFLLILVSSVVMCMGTI. The helical transmembrane segment at 224–244 threads the bilayer; it reads NVETACIGWFTLEYLLRLFSS. Topologically, residues 245–249 are cytoplasmic; sequence PNKLH. The chain crosses the membrane as a helical span at residues 250–270; that stretch reads FALSFMNIVDVLAILPFYVSL. The helical; Voltage-sensor transmembrane segment at 290-310 threads the bilayer; it reads QALRIMRIARIFKLARHSSGL. Over 311-324 the chain is Cytoplasmic; sequence QTLTYALKRSFKEL. The helical transmembrane segment at 325–345 threads the bilayer; sequence GLLLMYLAVGIFVFSALGYTM. Residues 358–378 constitute an intramembrane region (pore-forming); sequence PQSFWWAIITMTTVGYGDIYP. The Selectivity filter signature appears at 370–375; that stretch reads TVGYGD. Residues 386–406 form a helical membrane-spanning segment; the sequence is NAAISFLCGVIAIALPIHPII. Residues 407-494 lie on the Cytoplasmic side of the membrane; it reads NNFVRYYNKQ…HHRTRLQSCK (88 aa). The interval 433-469 is disordered; the sequence is NSSSGGEGKTGGSRSDLDNLPPEPAGKEAPSCSSRLK.

It belongs to the potassium channel family. F (TC 1.A.1.2) subfamily. Kv5.1/KCNF1 sub-subfamily. Heterotetramer with KCNB1 or KCNB2. Detected in heart, brain, liver, skeletal muscle, kidney and pancreas.

Its subcellular location is the cell membrane. Regulatory alpha-subunit of the voltage-gated potassium (Kv) channel which, when coassembled with KCNB1 or KCNB2, can modulate their expression and their gating kinetics by acting on deactivation upon repolarization and inactivation during maintained depolarization. Accelerates inactivation but has relatively little effect on deactivation. Coexpression with KCNB1 or KCNB2 markedly slows inactivation. Each modulatory subunit has its own specific properties of regulation, and can lead to extensive inhibitions, to large changes in kinetics, and/or to large shifts in the voltage dependencies of the inactivation process. The gating kinetics depends on the nature and stoichiometry of the associated regulatory sunbunit. Fails to produce a potassium current when expressed alone. The chain is Voltage-gated potassium channel regulatory subunit KCNF1 from Homo sapiens (Human).